A 137-amino-acid chain; its full sequence is Profilin-3 (137 aa).

Belongs to the profilin family. As to quaternary structure, interacts with ACTRT3. Testis specific.

The protein resides in the cytoplasm. It localises to the cytoskeleton. The protein localises to the nucleus. Its function is as follows. Binds to actin and affects the structure of the cytoskeleton. Slightly reduces actin polymerization. Binds to poly-L-proline, phosphatidylinositol 3-phosphate (PtdIns(3)P), phosphatidylinositol 4,5-bisphosphate (PtdIns(4,5)P2) and phosphatidylinositol 4-phosphate (PtdIns(4)P). May be involved in spermatogenesis. This chain is Profilin-3 (PFN3), found in Homo sapiens (Human).